Reading from the N-terminus, the 259-residue chain is DNA repair protein RecO (259 aa).

Belongs to the RecO family.

Involved in DNA repair and RecF pathway recombination. The sequence is that of DNA repair protein RecO from Leuconostoc mesenteroides subsp. mesenteroides (strain ATCC 8293 / DSM 20343 / BCRC 11652 / CCM 1803 / JCM 6124 / NCDO 523 / NBRC 100496 / NCIMB 8023 / NCTC 12954 / NRRL B-1118 / 37Y).